A 338-amino-acid polypeptide reads, in one-letter code: tRNA N6-adenosine threonylcarbamoyltransferase (338 aa).

Fe cation-binding residues include H109 and H113. Substrate is bound by residues 132–136 (AISGA), D165, G178, and N277. Fe cation is bound at residue D302.

It belongs to the KAE1 / TsaD family. The cofactor is Fe(2+).

The protein localises to the cytoplasm. It catalyses the reaction L-threonylcarbamoyladenylate + adenosine(37) in tRNA = N(6)-L-threonylcarbamoyladenosine(37) in tRNA + AMP + H(+). In terms of biological role, required for the formation of a threonylcarbamoyl group on adenosine at position 37 (t(6)A37) in tRNAs that read codons beginning with adenine. Is involved in the transfer of the threonylcarbamoyl moiety of threonylcarbamoyl-AMP (TC-AMP) to the N6 group of A37, together with TsaE and TsaB. TsaD likely plays a direct catalytic role in this reaction. In Chlamydia trachomatis serovar L2b (strain UCH-1/proctitis), this protein is tRNA N6-adenosine threonylcarbamoyltransferase.